We begin with the raw amino-acid sequence, 471 residues long: Collagenase 3 (471 aa).

The first 19 residues, 1 to 19, serve as a signal peptide directing secretion; that stretch reads MQPGVLAACLLLSWTHCWS. The propeptide at 20-103 is activation peptide; sequence LPLLNSNEDD…PRCGVPDVGE (84 aa). Residues 94 to 101 carry the Cysteine switch motif; that stretch reads PRCGVPDV. A Zn(2+)-binding site is contributed by C96. An N-linked (GlcNAc...) asparagine glycan is attached at N117. D128 provides a ligand contact to Ca(2+). N-linked (GlcNAc...) asparagine glycans are attached at residues N152 and N158. D162 lines the Ca(2+) pocket. 2 residues coordinate Zn(2+): H172 and D174. The segment at 176 to 246 is interaction with TIMP2; the sequence is YPFDGPSGLL…GALMFPIYTY (71 aa). Ca(2+) contacts are provided by D179, G180, S182, and L184. H187 lines the Zn(2+) pocket. The Ca(2+) site is built by N194, G196, and D198. H200 contacts Zn(2+). Ca(2+)-binding residues include D202, D203, and E205. H222 contacts Zn(2+). E223 is an active-site residue. 3 residues coordinate Zn(2+): H226, H232, and M240. The segment at 263-284 is disordered; sequence QSLYGPGDEDPNPKHPKTPDKC. Positions 268-471 are interaction with collagen; that stretch reads PGDEDPNPKH…VMPTNSLLWC (204 aa). The span at 273–284 shows a compositional bias: basic and acidic residues; sequence PNPKHPKTPDKC. Hemopexin repeat units follow at residues 281 to 330, 331 to 377, 379 to 427, and 428 to 471; these read PDKC…WPEL, PNRI…GFPR, VKKI…FPGI, and GGKV…LLWC. Residues C284 and C471 are joined by a disulfide bond. Positions 291, 293, 335, and 337 each coordinate Ca(2+). Phosphotyrosine; by PKDCC is present on Y366. Ca(2+) is bound by residues S383 and A385. Residue N409 is glycosylated (N-linked (GlcNAc...) asparagine). Ca(2+) contacts are provided by D432 and V434.

It belongs to the peptidase M10A family. Ca(2+) is required as a cofactor. It depends on Zn(2+) as a cofactor. Post-translationally, the proenzyme is activated by removal of the propeptide; this cleavage can be effected by other matrix metalloproteinases, such as MMP2, MMP3 and MMP14 and may involve several cleavage steps. Cleavage can also be autocatalytic, after partial maturation by another protease or after treatment with 4-aminophenylmercuric acetate (APMA) (in vitro). N-glycosylated. In terms of processing, tyrosine phosphorylated by PKDCC/VLK.

Its subcellular location is the secreted. It localises to the extracellular space. The protein resides in the extracellular matrix. In terms of biological role, plays a role in the degradation of extracellular matrix proteins including fibrillar collagen, fibronectin, TNC and ACAN. Cleaves triple helical collagens, including type I, type II and type III collagen, but has the highest activity with soluble type II collagen. Can also degrade collagen type IV, type XIV and type X. May also function by activating or degrading key regulatory proteins, such as TGFB1 and CCN2. Plays a role in wound healing, tissue remodeling, cartilage degradation, bone development, bone mineralization and ossification. Required for normal embryonic bone development and ossification. Plays a role in the healing of bone fractures via endochondral ossification. Plays a role in wound healing, probably by a mechanism that involves proteolytic activation of TGFB1 and degradation of CCN2. Plays a role in keratinocyte migration during wound healing. May play a role in cell migration and in tumor cell invasion. The protein is Collagenase 3 (MMP13) of Oryctolagus cuniculus (Rabbit).